A 198-amino-acid chain; its full sequence is Nucleoid occlusion factor SlmA (198 aa).

Residues 9–70 (RNRREEILQS…SLIEFIEDSL (62 aa)) form the HTH tetR-type domain. The segment at residues 33-52 (TTAKLAASVGVSEAALYRHF) is a DNA-binding region (H-T-H motif). Positions 117–145 (EQDRLQGRINQLFERIEAQLRQVLREKKM) form a coiled coil.

This sequence belongs to the nucleoid occlusion factor SlmA family. Homodimer. Interacts with FtsZ.

The protein localises to the cytoplasm. It is found in the nucleoid. Its function is as follows. Required for nucleoid occlusion (NO) phenomenon, which prevents Z-ring formation and cell division over the nucleoid. Acts as a DNA-associated cell division inhibitor that binds simultaneously chromosomal DNA and FtsZ, and disrupts the assembly of FtsZ polymers. SlmA-DNA-binding sequences (SBS) are dispersed on non-Ter regions of the chromosome, preventing FtsZ polymerization at these regions. The chain is Nucleoid occlusion factor SlmA from Cronobacter sakazakii (strain ATCC BAA-894) (Enterobacter sakazakii).